The primary structure comprises 4690 residues: Nonribosomal peptide synthetase sidN (4690 aa).

Residues 238 to 656 (ARVRENPGRI…LGRLSSDQIK (419 aa)) form an adenylation 1 region. The Carrier 1 domain maps to 779 to 856 (SSSIPMLQSV…DLDTKAQQAL (78 aa)). An O-(pantetheine 4'-phosphoryl)serine modification is found at serine 816. Residues 924–1175 (APGGKAFIQH…AFGNTMSDRF (252 aa)) form a condensation 1 region. The segment at 1349-1760 (EFAQKSPNAI…GRKDDLVKIR (412 aa)) is adenylation 2. Residues 1889–1965 (PAWCIKHRPL…DLINHLSVKR (77 aa)) form the Carrier 2 domain. Serine 1926 is subject to O-(pantetheine 4'-phosphoryl)serine. The segment at 2001–2285 (PTTVFQDGML…SERLLESQLV (285 aa)) is condensation 2. Positions 2464–2869 (TWAKTHPEWK…GRKDEQVKVR (406 aa)) are adenylation 3. The Carrier 3 domain occupies 3002–3079 (RDLTSIEKQI…ELGRMKNALK (78 aa)). Serine 3040 carries the post-translational modification O-(pantetheine 4'-phosphoryl)serine. Residues 3121 to 3530 (CMPLQEVLVA…QMESLVTSFT (410 aa)) are condensation 3. The Carrier 4 domain occupies 3564–3637 (SVLEQQIRDV…KLATHIQTTS (74 aa)). Residue serine 3598 is modified to O-(pantetheine 4'-phosphoryl)serine. A condensation 4 region spans residues 3679–4087 (VYPLTPLQAG…FESIRKHPDE (409 aa)). Positions 4119 to 4195 (SAIDQFLDPL…KLCEVAFAKS (77 aa)) constitute a Carrier 5 domain. Position 4156 is an O-(pantetheine 4'-phosphoryl)serine (serine 4156). Residues 4262–4589 (WVFKAENGLD…FNAHLNILWN (328 aa)) form a condensation 5 region.

The protein belongs to the NRP synthetase family.

It functions in the pathway siderophore biosynthesis. In terms of biological role, nonribosomal peptide synthetase required for the biosynthetis of epichloenin A, an extracellular siderophore that plays a crucial role in endophyte-grass symbioses. SidN assembles epichloenin A by activating and incorporating three trans-anhydromevalonylhydroxyornithine (trans-AMHO), 1 glutamine and 4 glycine moieties. Trans-AMHO is produced from L-ornithine via 2 steps involving a L-ornithine N(5)-monooxygenase and an AHMO-N(5)-transacylase that have still to be identified. The third adenylation domain (A3) of sidN incorporates the hydroxamate groups of the siderophore which forms an octahedral iron complex. The other component amino acids are assembled by sidN adenylation domains A1 and A2. This is Nonribosomal peptide synthetase sidN from Epichloe festucae (strain Fl1).